Consider the following 158-residue polypeptide: Acireductone dioxygenase (158 aa).

4 residues coordinate Fe(2+): His-81, His-83, Glu-87, and His-126. His-81, His-83, Glu-87, and His-126 together coordinate Ni(2+).

Belongs to the acireductone dioxygenase (ARD) family. It depends on Fe(2+) as a cofactor. Requires Ni(2+) as cofactor.

The protein localises to the cytoplasm. The protein resides in the nucleus. It catalyses the reaction 1,2-dihydroxy-5-(methylsulfanyl)pent-1-en-3-one + O2 = 4-methylsulfanyl-2-oxobutanoate + formate + 2 H(+). The catalysed reaction is 1,2-dihydroxy-5-(methylsulfanyl)pent-1-en-3-one + O2 = 3-(methylsulfanyl)propanoate + CO + formate + 2 H(+). It participates in amino-acid biosynthesis; L-methionine biosynthesis via salvage pathway; L-methionine from S-methyl-5-thio-alpha-D-ribose 1-phosphate: step 5/6. In terms of biological role, catalyzes 2 different reactions between oxygen and the acireductone 1,2-dihydroxy-3-keto-5-methylthiopentene (DHK-MTPene) depending upon the metal bound in the active site. Fe-containing acireductone dioxygenase (Fe-ARD) produces formate and 2-keto-4-methylthiobutyrate (KMTB), the alpha-ketoacid precursor of methionine in the methionine recycle pathway. Ni-containing acireductone dioxygenase (Ni-ARD) produces methylthiopropionate, carbon monoxide and formate, and does not lie on the methionine recycle pathway. This chain is Acireductone dioxygenase, found in Metarhizium robertsii (strain ARSEF 23 / ATCC MYA-3075) (Metarhizium anisopliae (strain ARSEF 23)).